Consider the following 499-residue polypeptide: Putative lipase atg15 (499 aa).

At 1–9 the chain is on the cytoplasmic side; sequence MSIGEVSDS. Residues 10–30 traverse the membrane as a helical; Signal-anchor for type II membrane protein segment; that stretch reads AGHLASLVLPIEVAPIAPLIP. At 31 to 499 the chain is on the lumenal side; it reads EPPATAEHIF…PDSPERNEEM (469 aa). 5 N-linked (GlcNAc...) asparagine glycosylation sites follow: Asn170, Asn191, Asn192, Asn250, and Asn274. Ser290 serves as the catalytic Charge relay system. N-linked (GlcNAc...) asparagine glycosylation is present at Asn436. A disordered region spans residues 436-499; the sequence is NGTETTTTSS…PDSPERNEEM (64 aa). The segment covering 438–454 has biased composition (low complexity); it reads TETTTTSSAPTTTSISR.

The protein belongs to the AB hydrolase superfamily. Lipase family. In terms of assembly, binds to both phosphatidylinositol (PI) and phosphatidylinositol 3,5-bisphosphate (PIP2).

It localises to the endosome. The protein localises to the multivesicular body membrane. Its subcellular location is the prevacuolar compartment membrane. It carries out the reaction a triacylglycerol + H2O = a diacylglycerol + a fatty acid + H(+). Its function is as follows. Lipase which is essential for lysis of subvacuolar cytoplasm to vacuole targeted bodies and intravacuolar autophagic bodies. Involved in the lysis of intravacuolar multivesicular body (MVB) vesicles. The intravacuolar membrane disintegration by atg15 is critical to life span extension. The polypeptide is Putative lipase atg15 (atg15) (Chaetomium globosum (strain ATCC 6205 / CBS 148.51 / DSM 1962 / NBRC 6347 / NRRL 1970) (Soil fungus)).